We begin with the raw amino-acid sequence, 432 residues long: 3-phosphoshikimate 1-carboxyvinyltransferase (432 aa).

K23, S24, and R28 together coordinate 3-phosphoshikimate. K23 lines the phosphoenolpyruvate pocket. Residues G95 and R123 each contribute to the phosphoenolpyruvate site. Residues S167, Q169, D317, and K344 each coordinate 3-phosphoshikimate. Q169 contacts phosphoenolpyruvate. D317 (proton acceptor) is an active-site residue. R348 and R390 together coordinate phosphoenolpyruvate.

The protein belongs to the EPSP synthase family. Monomer.

It localises to the cytoplasm. The catalysed reaction is 3-phosphoshikimate + phosphoenolpyruvate = 5-O-(1-carboxyvinyl)-3-phosphoshikimate + phosphate. Its pathway is metabolic intermediate biosynthesis; chorismate biosynthesis; chorismate from D-erythrose 4-phosphate and phosphoenolpyruvate: step 6/7. Catalyzes the transfer of the enolpyruvyl moiety of phosphoenolpyruvate (PEP) to the 5-hydroxyl of shikimate-3-phosphate (S3P) to produce enolpyruvyl shikimate-3-phosphate and inorganic phosphate. This is 3-phosphoshikimate 1-carboxyvinyltransferase from Staphylococcus carnosus (strain TM300).